A 253-amino-acid chain; its full sequence is Hydroxyacylglutathione hydrolase (253 aa).

Residues His-54, His-56, Asp-58, His-59, His-112, Asp-131, and His-169 each coordinate Zn(2+).

This sequence belongs to the metallo-beta-lactamase superfamily. Glyoxalase II family. Monomer. Zn(2+) serves as cofactor.

The catalysed reaction is an S-(2-hydroxyacyl)glutathione + H2O = a 2-hydroxy carboxylate + glutathione + H(+). Its pathway is secondary metabolite metabolism; methylglyoxal degradation; (R)-lactate from methylglyoxal: step 2/2. In terms of biological role, thiolesterase that catalyzes the hydrolysis of S-D-lactoyl-glutathione to form glutathione and D-lactic acid. The polypeptide is Hydroxyacylglutathione hydrolase (Bartonella tribocorum (strain CIP 105476 / IBS 506)).